The sequence spans 843 residues: DNA gyrase subunit A (843 aa).

The Topo IIA-type catalytic domain maps to 61-528; sequence LPDVRDGLKP…ESSTFNAEDL (468 aa). Y149 acts as the O-(5'-phospho-DNA)-tyrosine intermediate in catalysis. The GyrA-box signature appears at 555 to 561; that stretch reads QKRGGKG.

This sequence belongs to the type II topoisomerase GyrA/ParC subunit family. Heterotetramer, composed of two GyrA and two GyrB chains. In the heterotetramer, GyrA contains the active site tyrosine that forms a transient covalent intermediate with DNA, while GyrB binds cofactors and catalyzes ATP hydrolysis.

The protein localises to the cytoplasm. The enzyme catalyses ATP-dependent breakage, passage and rejoining of double-stranded DNA.. A type II topoisomerase that negatively supercoils closed circular double-stranded (ds) DNA in an ATP-dependent manner to modulate DNA topology and maintain chromosomes in an underwound state. Negative supercoiling favors strand separation, and DNA replication, transcription, recombination and repair, all of which involve strand separation. Also able to catalyze the interconversion of other topological isomers of dsDNA rings, including catenanes and knotted rings. Type II topoisomerases break and join 2 DNA strands simultaneously in an ATP-dependent manner. The chain is DNA gyrase subunit A from Leptospira biflexa serovar Patoc (strain Patoc 1 / Ames).